Here is a 201-residue protein sequence, read N- to C-terminus: Akirin-2 (201 aa).

A phosphoserine mark is found at S18 and S21. The Nuclear localization signal signature appears at 22-27 (PKRRRC). The residue at position 55 (S55) is a Phosphoserine. Positions 198–201 (SYVS) match the SYVS motif motif.

Belongs to the akirin family. Homodimer. Interacts with IPO9; the interaction is direct. Associates with 20S and 26S proteasomes. Interacts with SMARCD1; promoting SWI/SNF complex recruitment. Interacts with NFKBIZ. Interacts with YWHAB. Polyubiquitinated. Polyubiquitination is dependent of UBR5 that extends pre-ubiquitinated AKIRIN2. In terms of tissue distribution, highly expressed in testis, cerebrum and cerebellum, and barely detectable in liver, heart, spleen and muscle. Also highly expressed in various tumor cells from hepatoma, glioblastoma and pheochromocytoma.

It is found in the nucleus. Its subcellular location is the cytoplasm. The protein resides in the membrane. In terms of biological role, molecular adapter that acts as a bridge between a variety of multiprotein complexes, and which is involved in embryonic development, immunity, myogenesis and brain development. Plays a key role in nuclear protein degradation by promoting import of proteasomes into the nucleus: directly binds to fully assembled 20S proteasomes at one end and to nuclear import receptor IPO9 at the other end, bridging them together and mediating the import of pre-assembled proteasome complexes through the nuclear pore. Involved in innate immunity by regulating the production of interleukin-6 (IL6) downstream of Toll-like receptor (TLR): acts by bridging the NF-kappa-B inhibitor NFKBIZ and the SWI/SNF complex, leading to promote induction of IL6. Also involved in adaptive immunity by promoting B-cell activation. Involved in brain development: required for the survival and proliferation of cerebral cortical progenitor cells. Involved in myogenesis: required for skeletal muscle formation and skeletal development, possibly by regulating expression of muscle differentiation factors. Also plays a role in facilitating interdigital tissue regression during limb development. In Rattus norvegicus (Rat), this protein is Akirin-2.